We begin with the raw amino-acid sequence, 74 residues long: Brevinin-2Ta (74 aa).

Positions 1–22 (MFTMKKSLLLFFFLGTISLSLC) are cleaved as a signal peptide. The propeptide occupies 23–41 (QEERNADEDDGEMTEEEKR). A disulfide bridge connects residues Cys68 and Cys74.

The protein belongs to the frog skin active peptide (FSAP) family. Brevinin subfamily. As to expression, expressed by the skin glands.

It localises to the secreted. In terms of biological role, antimicrobial peptide. The sequence is that of Brevinin-2Ta from Rana temporaria (European common frog).